The following is a 304-amino-acid chain: Coenzyme PQQ synthesis protein B (304 aa).

It belongs to the PqqB family.

It functions in the pathway cofactor biosynthesis; pyrroloquinoline quinone biosynthesis. In terms of biological role, may be involved in the transport of PQQ or its precursor to the periplasm. This is Coenzyme PQQ synthesis protein B from Ectopseudomonas mendocina (strain ymp) (Pseudomonas mendocina).